We begin with the raw amino-acid sequence, 988 residues long: Kinesin-like protein CIN8 (988 aa).

A Kinesin motor domain is found at 33 to 470; that stretch reads NILVAVRCRG…LEYASKAKNI (438 aa). Residue 125 to 132 coordinates ATP; the sequence is GMTSTGKT. The interval 206–301 is disordered; sequence FDSNVNGTSA…NSNNTNQQQS (96 aa). The span at 208-237 shows a compositional bias: low complexity; sequence SNVNGTSASGSSSRSSSRNNSPRSAPDNSR. Over residues 248 to 280 the composition is skewed to polar residues; the sequence is HNTTGNSKISNNNHNKFSRFKQTSQESTRAHAS. Over residues 281 to 301 the composition is skewed to low complexity; the sequence is NNHQNVHIPNNNSNNTNQQQS. Coiled-coil stretches lie at residues 514–619 and 707–769; these read EHYK…ELQQ and KLAE…MQNF. A compositionally biased stretch (basic and acidic residues) spans 965–974; it reads ALQEKRKPED. The disordered stretch occupies residues 965 to 988; sequence ALQEKRKPEDEVLLQAKLQRRNPD.

This sequence belongs to the TRAFAC class myosin-kinesin ATPase superfamily. Kinesin family. BimC subfamily.

It is found in the cytoplasm. The protein resides in the cytoskeleton. It localises to the spindle. Elongates the mitotic spindle by interacting with spindle microtubules to generate an outward force pushing spindle poles apart. Following spindle assembly, CIN8 and KIP1 apparently act to oppose a force, possibly generated by KAR3, that draws separated poles back together. This is Kinesin-like protein CIN8 (CIN8) from Candida glabrata (strain ATCC 2001 / BCRC 20586 / JCM 3761 / NBRC 0622 / NRRL Y-65 / CBS 138) (Yeast).